A 717-amino-acid polypeptide reads, in one-letter code: CRISPR-associated protein Cas8b (717 aa).

2 disordered regions span residues 263–283 (IGVF…DQSW) and 698–717 (HEKE…STTN). Acidic residues predominate over residues 701–717 (EDEDDQDTEEPAESTTN).

The protein resides in the cytoplasm. Functionally, CRISPR (clustered regularly interspaced short palindromic repeat) is an adaptive immune system that provides protection against mobile genetic elements (viruses, transposable elements and conjugative plasmids). CRISPR clusters contain sequences complementary to antecedent mobile elements and target invading nucleic acids. CRISPR clusters are transcribed and processed into CRISPR RNA (crRNA). Plasmid targeted by CRISPR locus P1 transform wild-type cells very poorly. This subunit might be involved in stabilizing crRNA. The sequence is that of CRISPR-associated protein Cas8b from Haloferax volcanii (strain ATCC 29605 / DSM 3757 / JCM 8879 / NBRC 14742 / NCIMB 2012 / VKM B-1768 / DS2) (Halobacterium volcanii).